A 76-amino-acid polypeptide reads, in one-letter code: uncharacterized protein (76 aa).

3 helical membrane-spanning segments follow: residues 1 to 21 (MTAIIVYSCLTMCVIYFHLQL), 35 to 55 (CFDIFLLLIEMLKLIFYLLII), and 56 to 76 (NNKFYIFIIISIALITINTMI).

It localises to the cell membrane. This is an uncharacterized protein from Borreliella burgdorferi (strain ATCC 35210 / DSM 4680 / CIP 102532 / B31) (Borrelia burgdorferi).